Reading from the N-terminus, the 204-residue chain is Small ribosomal subunit protein uS7 (204 aa).

The residue at position 1 (methionine 1) is an N-acetylmethionine. Residue threonine 2 is modified to N-acetylthreonine; in 40S ribosomal protein S5, N-terminally processed. Threonine 14 carries the post-translational modification Phosphothreonine. Residue lysine 47 is modified to N6-acetyllysine; alternate. Lysine 47 is covalently cross-linked (Glycyl lysine isopeptide (Lys-Gly) (interchain with G-Cter in SUMO2); alternate). Serine 142 carries the post-translational modification Phosphoserine.

This sequence belongs to the universal ribosomal protein uS7 family. Component of the small ribosomal subunit. Part of the small subunit (SSU) processome, composed of more than 70 proteins and the RNA chaperone small nucleolar RNA (snoRNA) U3.

The protein resides in the cytoplasm. It is found in the nucleus. The protein localises to the nucleolus. Functionally, component of the small ribosomal subunit. The ribosome is a large ribonucleoprotein complex responsible for the synthesis of proteins in the cell. Part of the small subunit (SSU) processome, first precursor of the small eukaryotic ribosomal subunit. During the assembly of the SSU processome in the nucleolus, many ribosome biogenesis factors, an RNA chaperone and ribosomal proteins associate with the nascent pre-rRNA and work in concert to generate RNA folding, modifications, rearrangements and cleavage as well as targeted degradation of pre-ribosomal RNA by the RNA exosome. The chain is Small ribosomal subunit protein uS7 (RPS5) from Bos taurus (Bovine).